The chain runs to 312 residues: Urease accessory protein UreD (312 aa).

The protein belongs to the UreD family. As to quaternary structure, ureD, UreF and UreG form a complex that acts as a GTP-hydrolysis-dependent molecular chaperone, activating the urease apoprotein by helping to assemble the nickel containing metallocenter of UreC. The UreE protein probably delivers the nickel.

It is found in the cytoplasm. Its function is as follows. Required for maturation of urease via the functional incorporation of the urease nickel metallocenter. The chain is Urease accessory protein UreD from Marinomonas sp. (strain MWYL1).